We begin with the raw amino-acid sequence, 358 residues long: Alanine racemase (358 aa).

Residue lysine 35 is the Proton acceptor; specific for D-alanine of the active site. Position 35 is an N6-(pyridoxal phosphate)lysine (lysine 35). Substrate is bound at residue arginine 130. Tyrosine 255 functions as the Proton acceptor; specific for L-alanine in the catalytic mechanism. Methionine 303 contributes to the substrate binding site.

This sequence belongs to the alanine racemase family. The cofactor is pyridoxal 5'-phosphate.

It carries out the reaction L-alanine = D-alanine. It functions in the pathway amino-acid biosynthesis; D-alanine biosynthesis; D-alanine from L-alanine: step 1/1. Catalyzes the interconversion of L-alanine and D-alanine. May also act on other amino acids. The sequence is that of Alanine racemase (alr) from Shewanella putrefaciens (strain CN-32 / ATCC BAA-453).